Here is a 457-residue protein sequence, read N- to C-terminus: Toxin and drug export protein A (457 aa).

Residues 1 to 23 (MFTIKKLTLTIVVATTLTGCANI) form the signal peptide.

This sequence belongs to the outer membrane factor (OMF) (TC 1.B.17) family. Homotrimer. Probably part of a complex composed of LtxB, LtxD and TdeA, which forms a single transport channel across the two membranes.

Its subcellular location is the cell outer membrane. Functionally, required for secretion of the LtxA leukotoxin and resistance to various antimicrobial compounds. This Aggregatibacter actinomycetemcomitans (Actinobacillus actinomycetemcomitans) protein is Toxin and drug export protein A.